Here is a 126-residue protein sequence, read N- to C-terminus: Small ribosomal subunit protein bS6 (126 aa).

The interval 101 to 126 (VMMKAKEERSAKREDAAPRAEEAAAE) is disordered. Residues 104-126 (KAKEERSAKREDAAPRAEEAAAE) are compositionally biased toward basic and acidic residues.

Belongs to the bacterial ribosomal protein bS6 family.

Its function is as follows. Binds together with bS18 to 16S ribosomal RNA. The protein is Small ribosomal subunit protein bS6 of Aliivibrio fischeri (strain ATCC 700601 / ES114) (Vibrio fischeri).